The following is a 263-amino-acid chain: Probable esterase PIR7A (263 aa).

Serine 82 functions as the Acyl-ester intermediate in the catalytic mechanism. Residues aspartate 213 and histidine 241 each act as charge relay system in the active site.

Belongs to the AB hydrolase superfamily.

The sequence is that of Probable esterase PIR7A (PIR7A) from Oryza sativa subsp. indica (Rice).